The chain runs to 256 residues: Small ribosomal subunit protein eS1 (256 aa).

Over residues 1–18 the composition is skewed to basic residues; the sequence is MAVGKNKRLSKGKKGIKK. A disordered region spans residues 1 to 20; that stretch reads MAVGKNKRLSKGKKGIKKRT. At alanine 2 the chain carries N-acetylalanine; partial.

Belongs to the eukaryotic ribosomal protein eS1 family. In terms of assembly, component of the small ribosomal subunit. Mature ribosomes consist of a small (40S) and a large (60S) subunit. The 40S subunit contains about 33 different proteins and 1 molecule of RNA (18S). The 60S subunit contains about 49 different proteins and 3 molecules of RNA (25S, 5.8S and 5S).

Its subcellular location is the cytoplasm. This Emericella nidulans (strain FGSC A4 / ATCC 38163 / CBS 112.46 / NRRL 194 / M139) (Aspergillus nidulans) protein is Small ribosomal subunit protein eS1 (rps1).